A 298-amino-acid chain; its full sequence is Heterogeneous nuclear ribonucleoprotein C (298 aa).

Position 2 is an N-acetylalanine (Ala2). Residues Lys8, Lys50, Lys89, and Lys94 each participate in a glycyl lysine isopeptide (Lys-Gly) (interchain with G-Cter in SUMO2) cross-link. The RRM domain occupies 16–87; the sequence is SRVFIGNLNT…QVLDINLAAE (72 aa). Ser108 bears the Phosphoserine mark. Disordered regions lie at residues 131–177 and 204–298; these read PPPP…VKGD and EKEQ…EDDS. The short motif at 142–148 is the Nuclear localization signal element; it reads PSKRQRV. Ser149 and Ser153 each carry phosphoserine. Residues 162–173 are compositionally biased toward low complexity; it reads SKSGQRGSSSKS. Lys163 is modified (N6-acetyllysine; alternate). Residue Lys163 forms a Glycyl lysine isopeptide (Lys-Gly) (interchain with G-Cter in SUMO2); alternate linkage. Residues 176–211 adopt a coiled-coil conformation; sequence GDDLQAIKKELTQIKQKVDSLLESLEKIEKEQSKQA. Residue Lys209 forms a Glycyl lysine isopeptide (Lys-Gly) (interchain with G-Cter in SUMO2) linkage. Phosphoserine is present on residues Ser214, Ser216, and Ser217. Lys222 participates in a covalent cross-link: Glycyl lysine isopeptide (Lys-Gly) (interchain with G-Cter in SUMO2). Residue Lys225 forms a Glycyl lysine isopeptide (Lys-Gly) (interchain with G-Cter in SUMO2); alternate linkage. Lys225 participates in a covalent cross-link: Glycyl lysine isopeptide (Lys-Gly) (interchain with G-Cter in SUMO1); alternate. Residues Ser226, Ser231, Ser232, and Ser234 each carry the phosphoserine modification. Positions 235–246 are enriched in basic and acidic residues; the sequence is VKKDETNVKMES. Glycyl lysine isopeptide (Lys-Gly) (interchain with G-Cter in SUMO2) cross-links involve residues Lys236 and Lys237. Lys243 participates in a covalent cross-link: Glycyl lysine isopeptide (Lys-Gly) (interchain with G-Cter in SUMO2); alternate. Lys243 is covalently cross-linked (Glycyl lysine isopeptide (Lys-Gly) (interchain with G-Cter in SUMO); alternate). Residues Ser246 and Ser253 each carry the phosphoserine modification. Residues 248-269 are compositionally biased toward acidic residues; sequence AGADDSAEEGDLLDDDDNEDRG. Basic and acidic residues predominate over residues 270–279; it reads DDQLELKDDE. The segment covering 280-298 has biased composition (acidic residues); sequence KEPEEGEDDRDSANGEDDS. Phosphoserine is present on residues Ser291 and Ser298.

It belongs to the RRM HNRPC family. RALY subfamily. Tetramer composed of 3 copies of isoform C1 and 1 copy of isoform C2. Assembly of 3 tetramers with bound pre-mRNA gives rise to a 19S complex that interacts with HNRNPA2B1 tetramers. Component of the 40S hnRNP particle. Identified in the spliceosome C complex. Interacts with IGF2BP1. Interacts with PPIA/CYPA. In terms of processing, phosphorylated on Ser-253 and Ser-291 in resting cells. Sumoylated. Sumoylation reduces affinity for mRNA. Post-translationally, ubiquitinated and degraded after nucleo-cytoplasmic transport by YWHAE.

It is found in the nucleus. In terms of biological role, binds pre-mRNA and nucleates the assembly of 40S hnRNP particles. Interacts with poly-U tracts in the 3'-UTR or 5'-UTR of mRNA and modulates the stability and the level of translation of bound mRNA molecules. Single HNRNPC tetramers bind 230-240 nucleotides. Trimers of HNRNPC tetramers bind 700 nucleotides. May play a role in the early steps of spliceosome assembly and pre-mRNA splicing. N6-methyladenosine (m6A) has been shown to alter the local structure in mRNAs and long non-coding RNAs (lncRNAs) via a mechanism named 'm(6)A-switch', facilitating binding of HNRNPC, leading to regulation of mRNA splicing. This Rattus norvegicus (Rat) protein is Heterogeneous nuclear ribonucleoprotein C.